Here is an 864-residue protein sequence, read N- to C-terminus: DNA mismatch repair protein MutS (864 aa).

Position 607-614 (607-614 (GPNMGGKS)) interacts with ATP.

This sequence belongs to the DNA mismatch repair MutS family.

Its function is as follows. This protein is involved in the repair of mismatches in DNA. It is possible that it carries out the mismatch recognition step. This protein has a weak ATPase activity. This Neisseria meningitidis serogroup C (strain 053442) protein is DNA mismatch repair protein MutS.